Consider the following 418-residue polypeptide: Lysophosphatidic acid phosphatase type 6 (418 aa).

The N-terminal 25 residues, 1-25 (MRVWVPVGVLTSLAYCFHQRRVALA), are a transit peptide targeting the mitochondrion. The substrate binding stretch occupies residues 51–161 (RHGARSPLKP…VFIRSTNMFR (111 aa)). The Nucleophile role is filled by His52. The active-site Proton donor is Asp327.

Belongs to the histidine acid phosphatase family. As to quaternary structure, monomer.

The protein resides in the mitochondrion. It carries out the reaction a phosphate monoester + H2O = an alcohol + phosphate. It catalyses the reaction 1-(9Z-octadecenoyl)-sn-glycero-3-phosphate + H2O = 1-(9Z-octadecenoyl)-sn-glycerol + phosphate. Functionally, hydrolyzes lysophosphatidic acid (LPA) containing a medium length fatty acid chain to the corresponding monoacylglycerol. Has highest activity with lysophosphatidic acid containing myristate (C14:0), monounsaturated oleate (C18:1) or palmitate (C16:0), and lower activity with C18:0 and C6:0 lysophosphatidic acid. The polypeptide is Lysophosphatidic acid phosphatase type 6 (Acp6) (Mus musculus (Mouse)).